Consider the following 530-residue polypeptide: uncharacterized protein (530 aa).

Helical transmembrane passes span 4-23 (FLAA…GLAI), 28-47 (LFGV…VVST), 57-79 (FVFQ…PAFF), 91-113 (LFMI…AFGL), and 148-170 (VIGY…AVGA). The region spanning 260–344 (LGGECDTKIE…MGEVRRFLGD (85 aa)) is the RCK C-terminal domain. 4 helical membrane passes run 352–374 (VNLL…PVPL), 379–398 (TMYL…LGAL), 419–441 (LGLA…QALT), and 451–473 (VGFA…LLKL).

It belongs to the AAE transporter (TC 2.A.81) family.

The protein localises to the cell membrane. This is an uncharacterized protein from Corynebacterium efficiens (strain DSM 44549 / YS-314 / AJ 12310 / JCM 11189 / NBRC 100395).